Here is a 453-residue protein sequence, read N- to C-terminus: Alpha-2B adrenergic receptor (453 aa).

Residues 1–17 lie on the Extracellular side of the membrane; sequence MSGPTMDHQEPYSVQAT. Residues 18 to 42 traverse the membrane as a helical segment; sequence AAIASAITFLILFTIFGNALVILAV. The Cytoplasmic segment spans residues 43-54; it reads LTSRSLRAPQNL. Residues 55 to 80 traverse the membrane as a helical segment; the sequence is FLVSLAAADILVATLIIPFSLANELL. Residues 81 to 90 lie on the Extracellular side of the membrane; the sequence is GYWYFWRAWC. Residues cysteine 90 and cysteine 169 are joined by a disulfide bond. The helical transmembrane segment at 91–113 threads the bilayer; the sequence is EVYLALDVLFCTSSIVHLCAISL. At 114-135 the chain is on the cytoplasmic side; that stretch reads DRYWAVSRALEYNSKRTPRRIK. The helical transmembrane segment at 136–158 threads the bilayer; sequence CIILTVWLIAAVISLPPLIYKGD. The Extracellular portion of the chain corresponds to 159–174; it reads QRPEPRGLPQCELNQE. The helical transmembrane segment at 175-198 threads the bilayer; it reads AWYILASSIGSFFAPCLIMILVYL. The Cytoplasmic portion of the chain corresponds to 199–375; that stretch reads RIYVIAKRSH…LSREKRFTFV (177 aa). Residues 213 to 331 form a disordered region; that stretch reads GAKRGSGEGE…PASVCNPPLQ (119 aa). Residues 287 to 297 show a composition bias toward polar residues; sequence GQGQKKGTSGA. Residues 300 to 314 show a composition bias toward acidic residues; it reads EEGDEEDEEEVEECE. The chain crosses the membrane as a helical span at residues 376–399; sequence LAVVIGVFVVCWFPFFFSYSLGAI. Topologically, residues 400-408 are extracellular; that stretch reads CPQHCKVPH. The chain crosses the membrane as a helical span at residues 409–432; that stretch reads GLFQFFFWIGYCNSSLNPVIYTVF. Residues 433-453 are Cytoplasmic-facing; it reads NQDFRRAFRRILCRPWTQTGW. Cysteine 445 is lipidated: S-palmitoyl cysteine.

It belongs to the G-protein coupled receptor 1 family. Adrenergic receptor subfamily. ADRA2B sub-subfamily. In terms of assembly, interacts with RAB26. Interacts with PPP1R9B. Interacts with GGA1, GGA2 and GGA3.

It is found in the cell membrane. Alpha-2 adrenergic receptors mediate the catecholamine-induced inhibition of adenylate cyclase through the action of G proteins. The chain is Alpha-2B adrenergic receptor (Adra2b) from Rattus norvegicus (Rat).